The following is a 465-amino-acid chain: Na(+)-translocating NADH-quinone reductase subunit A (465 aa).

The protein belongs to the NqrA family. In terms of assembly, composed of six subunits; NqrA, NqrB, NqrC, NqrD, NqrE and NqrF.

The enzyme catalyses a ubiquinone + n Na(+)(in) + NADH + H(+) = a ubiquinol + n Na(+)(out) + NAD(+). Functionally, NQR complex catalyzes the reduction of ubiquinone-1 to ubiquinol by two successive reactions, coupled with the transport of Na(+) ions from the cytoplasm to the periplasm. NqrA to NqrE are probably involved in the second step, the conversion of ubisemiquinone to ubiquinol. This is Na(+)-translocating NADH-quinone reductase subunit A from Chlamydia trachomatis serovar L2b (strain UCH-1/proctitis).